A 500-amino-acid polypeptide reads, in one-letter code: 7-alpha-hydroxycholest-4-en-3-one 12-alpha-hydroxylase (500 aa).

A helical transmembrane segment spans residues 4-24 (WCTVLGALLTVVGCLCLSLLL). Serine 325 is subject to Phosphoserine. Cysteine 439 is a binding site for heme.

This sequence belongs to the cytochrome P450 family. Heme is required as a cofactor. Expressed in liver.

The protein localises to the endoplasmic reticulum membrane. Its subcellular location is the microsome membrane. The enzyme catalyses 7alpha-hydroxycholest-4-en-3-one + reduced [NADPH--hemoprotein reductase] + O2 = 7alpha,12alpha-dihydroxycholest-4-en-3-one + oxidized [NADPH--hemoprotein reductase] + H2O + H(+). It catalyses the reaction 5beta-cholestane-3alpha,7alpha-diol + reduced [NADPH--hemoprotein reductase] + O2 = 5beta-cholestane-3alpha,7alpha,12alpha-triol + oxidized [NADPH--hemoprotein reductase] + H2O + H(+). It carries out the reaction chenodeoxycholate + reduced [NADPH--hemoprotein reductase] + O2 = cholate + oxidized [NADPH--hemoprotein reductase] + H2O + H(+). It functions in the pathway lipid metabolism; bile acid biosynthesis. Its function is as follows. A cytochrome P450 monooxygenase involved in primary bile acid biosynthesis. Catalyzes the 12alpha-hydroxylation of 7alpha-hydroxy-4-cholesten-3-one, an intermediate metabolite in cholic acid biosynthesis. Controls biliary balance of cholic acid and chenodeoxycholic acid, ultimately regulating the intestinal absorption of dietary lipids. Mechanistically, uses molecular oxygen inserting one oxygen atom into a substrate, and reducing the second into a water molecule, with two electrons provided by NADPH via cytochrome P450 reductase (CPR; NADPH--hemoprotein reductase). This is 7-alpha-hydroxycholest-4-en-3-one 12-alpha-hydroxylase (Cyp8b1) from Mus musculus (Mouse).